Reading from the N-terminus, the 989-residue chain is Presequence protease, mitochondrial (989 aa).

A mitochondrion-targeting transit peptide spans 1–16 (MLRFQRFASSYAQAQA). Position 84 (His84) interacts with Zn(2+). Residue Glu87 is the Proton acceptor of the active site. His88 is a binding site for Zn(2+). Residue Glu160 is part of the active site. Residue Glu185 coordinates Zn(2+). Ser920 is subject to Phosphoserine. Position 972–979 (972–979 (GPGIEGKT)) interacts with ATP.

The protein belongs to the peptidase M16 family. PreP subfamily. In terms of assembly, monomer and homodimer; homodimerization is induced by binding of the substrate. The cofactor is Zn(2+).

The protein localises to the mitochondrion intermembrane space. The protein resides in the mitochondrion matrix. Activated by nucleotides, including ATP, GTP, CTP, UTP, and ADP. Activated by copper, manganese, calcium and magnesium ions; copper and manganese restore activity following inactivation by EDTA (ethylenediaminetetraacetic acid). Inhibited by metal chelators including EDTA, EGTA (ethylene glycol bis(2-aminoethyl)tetraacetic acid), and 1,10-phenanthroline. Inhibited by copper, zinc, and iron ions. Also inhibited by dithiothreitol p-mercuribenzenesulfonic acid, N-ethylmaleimide, protoporphyrin, hemin, protamine and triarginine. Functionally, degrades mitochondrial transit peptides after their cleavage in the intermembrane space or in the matrix, and presequence peptides; clearance of these peptides is required to keep the presequence processing machinery running. Preferentially cleaves the N-terminal side of paired basic amino acid residues. Also degrades other unstructured peptides. May function as an ATP-dependent peptidase as opposed to a metalloendopeptidase. This chain is Presequence protease, mitochondrial, found in Saccharomyces cerevisiae (strain ATCC 204508 / S288c) (Baker's yeast).